The primary structure comprises 548 residues: Cleavage and polyadenylation specificity factor subunit 6 (548 aa).

In terms of domain architecture, RRM spans 81 to 161 (IALYIGNLTW…QKPIVTPCNK (81 aa)). Over residues 169–180 (MQSRKTATQAGQ) the composition is skewed to polar residues. 2 disordered regions span residues 169–401 (MQSR…MDVV) and 473–548 (LHGI…YRHR). Pro residues-rich tracts occupy residues 221–279 (PAGP…PPVM), 294–362 (PPGP…PPPG), and 373–384 (GPPPSDPYGRPP). Composition is skewed to basic and acidic residues over residues 385–400 (PYER…DMDV) and 490–500 (RSRERDHSRSR). Positions 501–511 (EKSRRHKSRSR) are enriched in basic residues. The segment covering 512–548 (DRHDDYYRERSRERERHRDRERDRDRERDREREYRHR) has biased composition (basic and acidic residues).

This sequence belongs to the RRM CPSF6/7 family. In terms of assembly, component of the cleavage factor Im (CFIm) complex.

It localises to the nucleus. It is found in the nucleoplasm. The protein resides in the nucleus speckle. The protein localises to the cytoplasm. Component of the cleavage factor Im (CFIm) complex that functions as an activator of the pre-mRNA 3'-end cleavage and polyadenylation processing required for the maturation of pre-mRNA into functional mRNAs. CFIm contributes to the recruitment of multiprotein complexes on specific sequences on the pre-mRNA 3'-end, so called cleavage and polyadenylation signals (pA signals). Most pre-mRNAs contain multiple pA signals, resulting in alternative cleavage and polyadenylation (APA) producing mRNAs with variable 3'-end formation. The CFIm complex acts as a key regulator of cleavage and polyadenylation site choice during APA through its binding to 5'-UGUA-3' elements localized in the 3'-untranslated region (UTR) for a huge number of pre-mRNAs. Plays a role in mRNA export. This chain is Cleavage and polyadenylation specificity factor subunit 6, found in Xenopus laevis (African clawed frog).